The chain runs to 342 residues: S-adenosylmethionine:tRNA ribosyltransferase-isomerase (342 aa).

This sequence belongs to the QueA family. In terms of assembly, monomer.

Its subcellular location is the cytoplasm. It catalyses the reaction 7-aminomethyl-7-carbaguanosine(34) in tRNA + S-adenosyl-L-methionine = epoxyqueuosine(34) in tRNA + adenine + L-methionine + 2 H(+). It participates in tRNA modification; tRNA-queuosine biosynthesis. In terms of biological role, transfers and isomerizes the ribose moiety from AdoMet to the 7-aminomethyl group of 7-deazaguanine (preQ1-tRNA) to give epoxyqueuosine (oQ-tRNA). This is S-adenosylmethionine:tRNA ribosyltransferase-isomerase from Streptococcus agalactiae serotype III (strain NEM316).